The sequence spans 384 residues: S-adenosylmethionine synthase (384 aa).

H15 is an ATP binding site. A Mg(2+)-binding site is contributed by D17. E43 contacts K(+). L-methionine-binding residues include E56 and Q99. Residues 99 to 109 (QSPDINQGVDK) form a flexible loop region. ATP is bound by residues 164 to 166 (DAK), 230 to 231 (RF), D239, 245 to 246 (RK), A262, and K266. Residue D239 participates in L-methionine binding. K270 serves as a coordination point for L-methionine.

The protein belongs to the AdoMet synthase family. In terms of assembly, homotetramer; dimer of dimers. Mg(2+) serves as cofactor. K(+) is required as a cofactor.

It localises to the cytoplasm. The enzyme catalyses L-methionine + ATP + H2O = S-adenosyl-L-methionine + phosphate + diphosphate. Its pathway is amino-acid biosynthesis; S-adenosyl-L-methionine biosynthesis; S-adenosyl-L-methionine from L-methionine: step 1/1. Catalyzes the formation of S-adenosylmethionine (AdoMet) from methionine and ATP. The overall synthetic reaction is composed of two sequential steps, AdoMet formation and the subsequent tripolyphosphate hydrolysis which occurs prior to release of AdoMet from the enzyme. The polypeptide is S-adenosylmethionine synthase (Vibrio parahaemolyticus serotype O3:K6 (strain RIMD 2210633)).